The following is a 291-amino-acid chain: Phosphoribulokinase (291 aa).

12–20 (GSSGAGTTS) lines the ATP pocket.

It belongs to the phosphoribulokinase family. Homooctamer.

The catalysed reaction is D-ribulose 5-phosphate + ATP = D-ribulose 1,5-bisphosphate + ADP + H(+). Its pathway is carbohydrate biosynthesis; Calvin cycle. The chain is Phosphoribulokinase (cbbP) from Xanthobacter flavus.